The following is a 390-amino-acid chain: ATP-sensitive inward rectifier potassium channel 11 (390 aa).

The Cytoplasmic portion of the chain corresponds to 1–65 (MLSRKGIIPE…LQDVFTTLVD (65 aa)). ATP-binding residues include Asn-48 and Arg-50. A helical transmembrane segment spans residues 66 to 92 (LKWPHTLLIFTMSFLCSWLLFAMVWWL). Residues 93–116 (IAFAHGDLAPGEGTNVPCVTSIHS) lie on the Extracellular side of the membrane. An intrachain disulfide couples Cys-110 to Cys-142. Residues 117–133 (FSSAFLFSIEVQVTIGF) constitute an intramembrane region (discontinuously helical; Pore-forming). Positions 130 and 133 each coordinate K(+). Residues 130–135 (TIGFGG) carry the Selectivity filter motif. Over 134–142 (GGRMVTEEC) the chain is Extracellular. A helical membrane pass occupies residues 143-171 (PLAILILIVQNIVGLMINAIMLGCIFMKT). Residues 172–390 (AQAHRRAETL…KFSISPDSLS (219 aa)) are Cytoplasmic-facing. Arg-176 contacts a 1,2-diacyl-sn-glycero-3-phospho-(1D-myo-inositol-4,5-bisphosphate). Position 330 (Tyr-330) interacts with ATP. Thr-341 carries the phosphothreonine; by MAPK1 modification. The residue at position 385 (Ser-385) is a Phosphoserine; by MAPK1.

It belongs to the inward rectifier-type potassium channel (TC 1.A.2.1) family. KCNJ11 subfamily. Homotetramer; the homotetramer binds four ATP molecules (one ATP per subunit). Forms an heterooctamer with ABCC8/SUR1; one KCNJ11 homotetramer interacts with four ABCC8/SUR1 molecules. Interacts with ABCC9/SUR2. Phosphorylation by MAPK1 results in changes in channel gating that destabilize the closed states and reduce the ATP sensitivity.

It is found in the membrane. It catalyses the reaction K(+)(in) = K(+)(out). Its activity is regulated as follows. KATP channels are regulated by cytoplasmic ATP/ADP ratios; ATP inhibits the channel by closing the pore, while ADP activates the channel. Activated by phosphatidylinositol 4,5-biphosphate (PtdIns(4,5)P2). Its function is as follows. Inward rectifier potassium channel that forms the pore of ATP-sensitive potassium channels (KATP), regulating potassium permeability as a function of cytoplasmic ATP and ADP concentrations in many different cells. Inward rectifier potassium channels are characterized by a greater tendency to allow potassium to flow into the cell rather than out of it. Their voltage dependence is regulated by the concentration of extracellular potassium; as external potassium is raised, the voltage range of the channel opening shifts to more positive voltages. The inward rectification is mainly due to the blockage of outward current by internal magnesium. Can be blocked by extracellular barium. In pancreatic cells, it forms KATP channels with ABCC8/SUR1. Can form cardiac and smooth muscle-type KATP channels with ABCC9. The sequence is that of ATP-sensitive inward rectifier potassium channel 11 (Kcnj11) from Mus musculus (Mouse).